The following is a 548-amino-acid chain: MENREDLNSILPYLPLVIRSSSLYWPPRVVEALKAMSEGPSHSQVDSGEVLRQAIFDMRRSLSFSTLEPSASNGYAFLFDELIDEKESKRWFDEIIPALASLLLQFPSLLEVHFQNADNIVSGIKTGLRLLNSQQAGIVFLSQELIGALLACSFFCLFPDDNRGAKHLPVINFDHLFASLYISYSQSQESKIRCIMHYFERFCSCVPIGIVSFERKITAAPDADFWSKSDVSLCAFKVHSFGLIEDQPDNALEVDFANKYLGGGSLSRGCVQEEIRFMINPELIAGMLFLPRMDDNEAIEIVGAERFSCYTGYASSFRFAGEYIDKKAMDPFKRRRTRIVAIDALCTPKMRHFKDICLLREINKALCGFLNCSKAWEHQNIFMDEGDNEIQLVRNGRDSGLLRTETTASHRTPLNDVEMNREKPANNLIRDFYVEGVDNEDHEDDGVATGNWGCGVFGGDPELKATIQWLAASQTRRPFISYYTFGVEALRNLDQVTKWILSHKWTVGDLWNMMLEYSAQRLYKQTSVGFFSWLLPSLATTNKAIQPP.

This sequence belongs to the poly(ADP-ribose) glycohydrolase family.

It catalyses the reaction [(1''-&gt;2')-ADP-alpha-D-ribose](n) + H2O = [(1''-&gt;2')-ADP-alpha-D-ribose](n-1) + ADP-D-ribose. In terms of biological role, poly(ADP-ribose) synthesized after DNA damage is only present transiently and is rapidly degraded by poly(ADP-ribose) glycohydrolase. Involved in establishing period length of the circadian oscillator. May regulate post-translational poly(ADP-ribosyl)ation of an oscillator component. This chain is Poly(ADP-ribose) glycohydrolase 1 (PARG1), found in Arabidopsis thaliana (Mouse-ear cress).